We begin with the raw amino-acid sequence, 266 residues long: Undecaprenyl-diphosphatase (266 aa).

7 consecutive transmembrane segments (helical) span residues 8–28 (VLAL…AHLI), 39–59 (QGLA…VIYF), 87–107 (WAVG…HDII), 113–133 (SAQV…FADV), 188–208 (SFLL…LGLV), 219–239 (MIVL…HYFL), and 246–266 (TMLP…FLFW).

This sequence belongs to the UppP family.

It is found in the cell inner membrane. It carries out the reaction di-trans,octa-cis-undecaprenyl diphosphate + H2O = di-trans,octa-cis-undecaprenyl phosphate + phosphate + H(+). Its function is as follows. Catalyzes the dephosphorylation of undecaprenyl diphosphate (UPP). Confers resistance to bacitracin. The polypeptide is Undecaprenyl-diphosphatase (Thioalkalivibrio sulfidiphilus (strain HL-EbGR7)).